We begin with the raw amino-acid sequence, 205 residues long: Ribonuclease HII (205 aa).

In terms of domain architecture, RNase H type-2 spans 15–205 (SQVCGIDEAG…SFKLRKLGEK (191 aa)). The a divalent metal cation site is built by Asp21, Glu22, and Asp117.

The protein belongs to the RNase HII family. The cofactor is Mn(2+). Requires Mg(2+) as cofactor.

The protein localises to the cytoplasm. The enzyme catalyses Endonucleolytic cleavage to 5'-phosphomonoester.. Functionally, endonuclease that specifically degrades the RNA of RNA-DNA hybrids. This chain is Ribonuclease HII, found in Chlorobaculum tepidum (strain ATCC 49652 / DSM 12025 / NBRC 103806 / TLS) (Chlorobium tepidum).